A 345-amino-acid polypeptide reads, in one-letter code: S-adenosylmethionine:tRNA ribosyltransferase-isomerase (345 aa).

Belongs to the QueA family. In terms of assembly, monomer.

The protein resides in the cytoplasm. The enzyme catalyses 7-aminomethyl-7-carbaguanosine(34) in tRNA + S-adenosyl-L-methionine = epoxyqueuosine(34) in tRNA + adenine + L-methionine + 2 H(+). Its pathway is tRNA modification; tRNA-queuosine biosynthesis. Its function is as follows. Transfers and isomerizes the ribose moiety from AdoMet to the 7-aminomethyl group of 7-deazaguanine (preQ1-tRNA) to give epoxyqueuosine (oQ-tRNA). The polypeptide is S-adenosylmethionine:tRNA ribosyltransferase-isomerase (Helicobacter pylori (strain J99 / ATCC 700824) (Campylobacter pylori J99)).